The primary structure comprises 398 residues: Argininosuccinate synthase (398 aa).

9–17 (AYSGGLDTS) provides a ligand contact to ATP. Tyrosine 85 contributes to the L-citrulline binding site. Glycine 115 is an ATP binding site. 3 residues coordinate L-aspartate: threonine 117, asparagine 121, and aspartate 122. Position 121 (asparagine 121) interacts with L-citrulline. L-citrulline contacts are provided by arginine 125, serine 173, glutamate 258, and tyrosine 270.

The protein belongs to the argininosuccinate synthase family. Type 1 subfamily. Homotetramer.

The protein resides in the cytoplasm. The enzyme catalyses L-citrulline + L-aspartate + ATP = 2-(N(omega)-L-arginino)succinate + AMP + diphosphate + H(+). The protein operates within amino-acid biosynthesis; L-arginine biosynthesis; L-arginine from L-ornithine and carbamoyl phosphate: step 2/3. The polypeptide is Argininosuccinate synthase (Streptococcus pneumoniae (strain Hungary19A-6)).